The sequence spans 559 residues: Chaperonin GroEL 3 (559 aa).

ATP contacts are provided by residues 88 to 92, G426, and D507; that span reads DGTTT.

It belongs to the chaperonin (HSP60) family. As to quaternary structure, forms a cylinder of 14 subunits composed of two heptameric rings stacked back-to-back. Interacts with the co-chaperonin GroES.

It localises to the cytoplasm. It catalyses the reaction ATP + H2O + a folded polypeptide = ADP + phosphate + an unfolded polypeptide.. In terms of biological role, together with its co-chaperonin GroES, plays an essential role in assisting protein folding. The GroEL-GroES system forms a nano-cage that allows encapsulation of the non-native substrate proteins and provides a physical environment optimized to promote and accelerate protein folding. This chain is Chaperonin GroEL 3, found in Methylococcus capsulatus (strain ATCC 33009 / NCIMB 11132 / Bath).